A 413-amino-acid chain; its full sequence is Tyrosine--tRNA ligase (413 aa).

Tyr34 provides a ligand contact to L-tyrosine. The 'HIGH' region motif lies at 39–48 (CTAQSLHVGN). L-tyrosine-binding residues include Tyr171 and Gln175. A 'KMSKS' region motif is present at residues 231–235 (KMGKT). An ATP-binding site is contributed by Lys234. The 66-residue stretch at 346–411 (IPITELLVTI…GKKCHILVKI (66 aa)) folds into the S4 RNA-binding domain.

Belongs to the class-I aminoacyl-tRNA synthetase family. TyrS type 1 subfamily. Homodimer.

It localises to the cytoplasm. It catalyses the reaction tRNA(Tyr) + L-tyrosine + ATP = L-tyrosyl-tRNA(Tyr) + AMP + diphosphate + H(+). Its function is as follows. Catalyzes the attachment of tyrosine to tRNA(Tyr) in a two-step reaction: tyrosine is first activated by ATP to form Tyr-AMP and then transferred to the acceptor end of tRNA(Tyr). The sequence is that of Tyrosine--tRNA ligase from Orientia tsutsugamushi (strain Boryong) (Rickettsia tsutsugamushi).